The sequence spans 450 residues: UDP-N-acetylmuramoylalanine--D-glutamate ligase (450 aa).

ATP is bound at residue 119-125 (GSNGKTT).

The protein belongs to the MurCDEF family.

The protein localises to the cytoplasm. The enzyme catalyses UDP-N-acetyl-alpha-D-muramoyl-L-alanine + D-glutamate + ATP = UDP-N-acetyl-alpha-D-muramoyl-L-alanyl-D-glutamate + ADP + phosphate + H(+). The protein operates within cell wall biogenesis; peptidoglycan biosynthesis. Cell wall formation. Catalyzes the addition of glutamate to the nucleotide precursor UDP-N-acetylmuramoyl-L-alanine (UMA). The sequence is that of UDP-N-acetylmuramoylalanine--D-glutamate ligase from Streptococcus pneumoniae serotype 19F (strain G54).